We begin with the raw amino-acid sequence, 386 residues long: G2/mitotic-specific cyclin-B2 (386 aa).

Residues 45 to 64 are disordered; it reads TNGKVGPSKKPSKASCAQKP.

The protein belongs to the cyclin family. Cyclin AB subfamily. As to quaternary structure, interacts with the CDK1 protein kinase to form a serine/threonine kinase holoenzyme complex also known as maturation promoting factor (MPF). The cyclin subunit imparts substrate specificity to the complex.

Essential for the control of the cell cycle at the G2/M (mitosis) transition. The polypeptide is G2/mitotic-specific cyclin-B2 (ccnb2) (Oryzias luzonensis (Luzon ricefish)).